A 275-amino-acid polypeptide reads, in one-letter code: Exosome complex component Rrp42 (275 aa).

The protein belongs to the RNase PH family. Rrp42 subfamily. As to quaternary structure, component of the archaeal exosome complex. Forms a hexameric ring-like arrangement composed of 3 Rrp41-Rrp42 heterodimers. The hexameric ring associates with a trimer of Rrp4 and/or Csl4 subunits.

It is found in the cytoplasm. In terms of biological role, non-catalytic component of the exosome, which is a complex involved in RNA degradation. Contributes to the structuring of the Rrp41 active site. The polypeptide is Exosome complex component Rrp42 (Saccharolobus islandicus (strain Y.N.15.51 / Yellowstone #2) (Sulfolobus islandicus)).